We begin with the raw amino-acid sequence, 585 residues long: Organic cation transporter 1 (585 aa).

Residues 1–40 lie on the Cytoplasmic side of the membrane; that stretch reads MSFQAMETFAEISQEILMSATKPPDFDFVLEQVGNYGTYQ. The chain crosses the membrane as a helical span at residues 41–61; that stretch reads IVFFFIICLPTSLPSAFSAFN. Over 62–155 the chain is Extracellular; it reads IPFVVGNPPH…LVCDQQAWIE (94 aa). 3 N-linked (GlcNAc...) asparagine glycosylation sites follow: asparagine 87, asparagine 98, and asparagine 133. The helical transmembrane segment at 156 to 176 threads the bilayer; that stretch reads ISTTSFYVGSFIGNCLFGYVA. Over 177 to 184 the chain is Cytoplasmic; it reads DKFGRRRS. The chain crosses the membrane as a helical span at residues 185–205; the sequence is FFVILTVLIVCGTASSFAKDI. Over 206–212 the chain is Extracellular; it reads ESFIILR. A helical transmembrane segment spans residues 213-233; that stretch reads FFTGLAFPALFQIPFIICMEF. At 234-243 the chain is on the cytoplasmic side; that stretch reads MGNSGRIFSG. A helical membrane pass occupies residues 244-264; the sequence is LMTSLFFGAAMALLGVVAMFI. Residues 265-269 lie on the Extracellular side of the membrane; that stretch reads RRWRQ. A helical membrane pass occupies residues 270–290; sequence LTFFCNAPFAFYIIYYFFLPE. Topologically, residues 291–360 are cytoplasmic; that stretch reads SPRWSVSVGK…FKTPNLRRKT (70 aa). A helical membrane pass occupies residues 361 to 381; sequence LIVTYIWVMNAIIYNGLTLNV. The Extracellular segment spans residues 382 to 389; the sequence is SNLPVDDY. The helical transmembrane segment at 390–410 threads the bilayer; it reads WSFIINGAVELPGYFVVWPLL. Residues 411–416 are Cytoplasmic-facing; sequence QCAGRR. Residues 417 to 437 form a helical membrane-spanning segment; sequence WTLAATMIVCGIGCVSAMFMP. The Extracellular segment spans residues 438 to 446; sequence DGYPWLVAS. Residues 447 to 467 form a helical membrane-spanning segment; the sequence is ASFIGKFGVGSGFAVIYIFAG. The Cytoplasmic segment spans residues 468–476; it reads ELYPTVVRA. A helical transmembrane segment spans residues 477–497; the sequence is IGMGMSSMVAGSGLLLAPHIV. Residues 498 to 504 lie on the Extracellular side of the membrane; the sequence is NLGKIVK. The helical transmembrane segment at 505 to 525 threads the bilayer; sequence ILPLLIMGLMALSAGILTFFL. Residues 526 to 585 lie on the Cytoplasmic side of the membrane; it reads PETLGAPLPMTIEDAENFGKKPEPDSGMFTQAAKKRESQPLLEPHTPMDRRRRSSRLMNI. Residues 544-585 are disordered; sequence GKKPEPDSGMFTQAAKKRESQPLLEPHTPMDRRRRSSRLMNI. Basic residues predominate over residues 575–585; that stretch reads RRRRSSRLMNI.

The protein belongs to the major facilitator (TC 2.A.1) superfamily. Organic cation transporter (TC 2.A.1.19) family.

The protein localises to the membrane. Transports organic cations such as tetraethylammonium (TEA). Displays a broad substrate specificity. In Caenorhabditis elegans, this protein is Organic cation transporter 1 (oct-1).